The following is a 294-amino-acid chain: Large ribosomal subunit protein uL18 (294 aa).

The tract at residues 247–275 (RADPSPSAKKAAKPSKRHTAKRLTYDERK) is disordered. Over residues 256 to 267 (KAAKPSKRHTAK) the composition is skewed to basic residues.

This sequence belongs to the universal ribosomal protein uL18 family. As to quaternary structure, component of the large ribosomal subunit (LSU).

The protein resides in the cytoplasm. Its subcellular location is the nucleus. Component of the ribosome, a large ribonucleoprotein complex responsible for the synthesis of proteins in the cell. The small ribosomal subunit (SSU) binds messenger RNAs (mRNAs) and translates the encoded message by selecting cognate aminoacyl-transfer RNA (tRNA) molecules. The large subunit (LSU) contains the ribosomal catalytic site termed the peptidyl transferase center (PTC), which catalyzes the formation of peptide bonds, thereby polymerizing the amino acids delivered by tRNAs into a polypeptide chain. The nascent polypeptides leave the ribosome through a tunnel in the LSU and interact with protein factors that function in enzymatic processing, targeting, and the membrane insertion of nascent chains at the exit of the ribosomal tunnel. This is Large ribosomal subunit protein uL18 (rpl-5) from Caenorhabditis briggsae.